The following is a 406-amino-acid chain: Cysteine desulfurase (406 aa).

K226 is modified (N6-(pyridoxal phosphate)lysine). The Cysteine persulfide intermediate role is filled by C364.

This sequence belongs to the class-V pyridoxal-phosphate-dependent aminotransferase family. Csd subfamily. As to quaternary structure, homodimer. Interacts with SufE and the SufBCD complex composed of SufB, SufC and SufD. The interaction with SufE is required to mediate the direct transfer of the sulfur atom from the S-sulfanylcysteine. Pyridoxal 5'-phosphate is required as a cofactor.

It is found in the cytoplasm. The enzyme catalyses (sulfur carrier)-H + L-cysteine = (sulfur carrier)-SH + L-alanine. It carries out the reaction L-selenocysteine + AH2 = hydrogenselenide + L-alanine + A + H(+). It participates in cofactor biosynthesis; iron-sulfur cluster biosynthesis. Functionally, cysteine desulfurases mobilize the sulfur from L-cysteine to yield L-alanine, an essential step in sulfur metabolism for biosynthesis of a variety of sulfur-containing biomolecules. Component of the suf operon, which is activated and required under specific conditions such as oxidative stress and iron limitation. Acts as a potent selenocysteine lyase in vitro, that mobilizes selenium from L-selenocysteine. Selenocysteine lyase activity is however unsure in vivo. In Escherichia coli O6:K15:H31 (strain 536 / UPEC), this protein is Cysteine desulfurase.